A 401-amino-acid chain; its full sequence is Argininosuccinate synthase (401 aa).

Residues 7 to 15 (AYSGGLDTS) and alanine 34 contribute to the ATP site. Tyrosine 85 and serine 90 together coordinate L-citrulline. ATP is bound at residue glycine 115. Threonine 117, asparagine 121, and aspartate 122 together coordinate L-aspartate. Residue asparagine 121 coordinates L-citrulline. The L-citrulline site is built by arginine 125, serine 174, serine 183, glutamate 259, and tyrosine 271.

Belongs to the argininosuccinate synthase family. Type 1 subfamily. In terms of assembly, homotetramer.

The protein localises to the cytoplasm. The enzyme catalyses L-citrulline + L-aspartate + ATP = 2-(N(omega)-L-arginino)succinate + AMP + diphosphate + H(+). It participates in amino-acid biosynthesis; L-arginine biosynthesis; L-arginine from L-ornithine and carbamoyl phosphate: step 2/3. The polypeptide is Argininosuccinate synthase (Pelotomaculum thermopropionicum (strain DSM 13744 / JCM 10971 / SI)).